A 119-amino-acid polypeptide reads, in one-letter code: NADH-quinone oxidoreductase subunit A (119 aa).

Helical transmembrane passes span 9-29, 63-83, and 88-108; these read VLLF…LGYV, LVAI…PWAV, and VGMA…VGFA.

The protein belongs to the complex I subunit 3 family. In terms of assembly, NDH-1 is composed of 14 different subunits. Subunits NuoA, H, J, K, L, M, N constitute the membrane sector of the complex.

The protein localises to the cell inner membrane. It catalyses the reaction a quinone + NADH + 5 H(+)(in) = a quinol + NAD(+) + 4 H(+)(out). Functionally, NDH-1 shuttles electrons from NADH, via FMN and iron-sulfur (Fe-S) centers, to quinones in the respiratory chain. The immediate electron acceptor for the enzyme in this species is believed to be ubiquinone. Couples the redox reaction to proton translocation (for every two electrons transferred, four hydrogen ions are translocated across the cytoplasmic membrane), and thus conserves the redox energy in a proton gradient. This Verminephrobacter eiseniae (strain EF01-2) protein is NADH-quinone oxidoreductase subunit A.